Consider the following 357-residue polypeptide: Protein AAR2 homolog (357 aa).

Belongs to the AAR2 family.

This is Protein AAR2 homolog from Caenorhabditis elegans.